We begin with the raw amino-acid sequence, 503 residues long: Cytochrome P450 monooxygenase roqO (503 aa).

The helical transmembrane segment at 11–31 (YSGTACAISLFIFGITLLFPF) threads the bilayer. Residue N205 is glycosylated (N-linked (GlcNAc...) asparagine). C444 serves as a coordination point for heme.

It belongs to the cytochrome P450 family. It depends on heme as a cofactor.

The protein resides in the membrane. Its pathway is alkaloid biosynthesis. In terms of biological role, cytochrome P450 monooxygenase; part of the gene cluster that mediates the biosynthesis of the mycotoxin meleagrin. The first stage is catalyzed by the dipeptide synthase roqA which condenses histidine and tryptophan to produce histidyltryptophanyldiketopiperazine (HTD). HTD is then converted to roquefortine C through two possible pathways. In the first pathway, prenyltransferase roqD transforms HTD to the intermediate roquefortine D, which is in turn converted to roquefortine C by the cytochrome P450 monooxygenase roqR. In the second pathway, HTD is first converted to the intermediate dehydrohistidyltryptophanyldi-ketopiperazine (DHTD) by roqR which is then prenylated by roqD to form roquefortine C. Roquefortine C can be further transformed to meleagrin via three more reactions including oxydation to glandicolin A by roqM, which is further reduced to glandicoline B by roqO. Finally, glandicoline B is converted to meleagrin by the glandicoline B O-methyltransferase roqN. More studies identified further branching and additional metabolites produced by the roquefortine/meleagrin cluster, including roquefortine F, roquefortine L, roquefortine M, roquefortine N and neoxaline. In Penicillium rubens (strain ATCC 28089 / DSM 1075 / NRRL 1951 / Wisconsin 54-1255) (Penicillium chrysogenum), this protein is Cytochrome P450 monooxygenase roqO.